A 244-amino-acid polypeptide reads, in one-letter code: Na(+)-translocating NADH-quinone reductase subunit E (244 aa).

Helical transmembrane passes span 11–31, 47–67, 90–110, 123–143, 153–173, and 189–209; these read LLGI…TFLG, GLGM…WLIH, FLEL…LELL, GIFL…LFGI, VVFS…FATI, and MGIS…LTGI.

The protein belongs to the NqrDE/RnfAE family. In terms of assembly, composed of six subunits; NqrA, NqrB, NqrC, NqrD, NqrE and NqrF.

The protein localises to the cell inner membrane. It carries out the reaction a ubiquinone + n Na(+)(in) + NADH + H(+) = a ubiquinol + n Na(+)(out) + NAD(+). Functionally, NQR complex catalyzes the reduction of ubiquinone-1 to ubiquinol by two successive reactions, coupled with the transport of Na(+) ions from the cytoplasm to the periplasm. NqrA to NqrE are probably involved in the second step, the conversion of ubisemiquinone to ubiquinol. The polypeptide is Na(+)-translocating NADH-quinone reductase subunit E (Chlamydia muridarum (strain MoPn / Nigg)).